The following is a 356-amino-acid chain: Isopentenyl-diphosphate delta-isomerase (356 aa).

8 to 9 is a binding site for substrate; sequence RK. FMN-binding positions include 66–68, Ser96, and Asn124; that span reads AIT. 96–98 is a binding site for substrate; it reads SQR. Gln160 is a binding site for substrate. Mg(2+) is bound at residue Glu161. FMN-binding positions include Lys201, Thr231, 280–282, and 301–302; these read GIR and AL.

This sequence belongs to the IPP isomerase type 2 family. Homooctamer. Dimer of tetramers. FMN serves as cofactor. The cofactor is NADPH. Requires Mg(2+) as cofactor.

It is found in the cytoplasm. It carries out the reaction isopentenyl diphosphate = dimethylallyl diphosphate. In terms of biological role, involved in the biosynthesis of isoprenoids. Catalyzes the 1,3-allylic rearrangement of the homoallylic substrate isopentenyl (IPP) to its allylic isomer, dimethylallyl diphosphate (DMAPP). The polypeptide is Isopentenyl-diphosphate delta-isomerase (Methanococcus aeolicus (strain ATCC BAA-1280 / DSM 17508 / OCM 812 / Nankai-3)).